The chain runs to 110 residues: uncharacterized protein (110 aa).

This sequence to M.jannaschii MJ1213 and A.aeolicus AA15.

This is an uncharacterized protein from Methanocaldococcus jannaschii (strain ATCC 43067 / DSM 2661 / JAL-1 / JCM 10045 / NBRC 100440) (Methanococcus jannaschii).